Reading from the N-terminus, the 200-residue chain is 3-isopropylmalate dehydratase small subunit (200 aa).

This sequence belongs to the LeuD family. LeuD type 1 subfamily. Heterodimer of LeuC and LeuD.

It carries out the reaction (2R,3S)-3-isopropylmalate = (2S)-2-isopropylmalate. The protein operates within amino-acid biosynthesis; L-leucine biosynthesis; L-leucine from 3-methyl-2-oxobutanoate: step 2/4. Its function is as follows. Catalyzes the isomerization between 2-isopropylmalate and 3-isopropylmalate, via the formation of 2-isopropylmaleate. The protein is 3-isopropylmalate dehydratase small subunit of Histophilus somni (strain 129Pt) (Haemophilus somnus).